A 401-amino-acid chain; its full sequence is Imidazolonepropionase (401 aa).

The Fe(3+) site is built by H70 and H72. 2 residues coordinate Zn(2+): H70 and H72. Positions 79, 142, and 175 each coordinate 4-imidazolone-5-propanoate. Y142 is an N-formimidoyl-L-glutamate binding site. Fe(3+) is bound at residue H238. H238 contributes to the Zn(2+) binding site. Q241 contributes to the 4-imidazolone-5-propanoate binding site. Position 313 (D313) interacts with Fe(3+). A Zn(2+)-binding site is contributed by D313. N-formimidoyl-L-glutamate-binding residues include N315 and G317. T318 is a binding site for 4-imidazolone-5-propanoate.

Belongs to the metallo-dependent hydrolases superfamily. HutI family. The cofactor is Zn(2+). It depends on Fe(3+) as a cofactor.

It localises to the cytoplasm. The enzyme catalyses 4-imidazolone-5-propanoate + H2O = N-formimidoyl-L-glutamate. Its pathway is amino-acid degradation; L-histidine degradation into L-glutamate; N-formimidoyl-L-glutamate from L-histidine: step 3/3. Catalyzes the hydrolytic cleavage of the carbon-nitrogen bond in imidazolone-5-propanoate to yield N-formimidoyl-L-glutamate. It is the third step in the universal histidine degradation pathway. The polypeptide is Imidazolonepropionase (Xanthomonas euvesicatoria pv. vesicatoria (strain 85-10) (Xanthomonas campestris pv. vesicatoria)).